A 208-amino-acid chain; its full sequence is Type 3 secretion system stator protein (208 aa).

This sequence belongs to the SctL stator family. The core secretion machinery of the T3SS is composed of approximately 20 different proteins, including cytoplasmic components, a base, an export apparatus and a needle. This subunit is part of the cytosolic complex.

Its subcellular location is the cytoplasm. In terms of biological role, component of the type III secretion system (T3SS), also called injectisome, which is used to inject bacterial effector proteins into eukaryotic host cells. Acts as a regulator of the HrcN/SctN ATPase activity. The protein is Type 3 secretion system stator protein of Sinorhizobium fredii (strain NBRC 101917 / NGR234).